We begin with the raw amino-acid sequence, 213 residues long: DELTA-actitoxin-Aas1a (213 aa).

The N-terminal stretch at 1-19 is a signal peptide; it reads MSRLIIAFIVVTMVCSAIA. A propeptide spanning residues 20-34 is cleaved from the precursor; that stretch reads LPKKKVEPLEKDEKR. Residues 37–46 form a plays an important role in the hemolytic activity region; the sequence is AVAGAVIEGG. The N-terminal region stretch occupies residues 45 to 64; it reads GGNLVMSVLDRILEAIGDVN. Ser-88, Val-121, Ser-139, Pro-141, Tyr-167, Tyr-171, and Tyr-172 together coordinate phosphocholine. Positions 139-154 are trp-rich region, which is important for the binding to lipid membrane; it reads SIPYDYNLYSNWWNVK. The Cell attachment site, crucial for protein stability motif lies at 178–180; it reads KGD.

This sequence belongs to the actinoporin family. Sea anemone subfamily. Octamer or nonamer in membranes. Monomer in the soluble state.

The protein localises to the secreted. It is found in the nematocyst. The protein resides in the target cell membrane. Functionally, pore-forming protein that forms cation-selective hydrophilic pores of around 1 nm and causes cytolysis. Pore formation is a multi-step process that involves specific recognition of membrane sphingomyelin (but neither cholesterol nor phosphatidylcholine) using aromatic rich region and adjacent phosphocholine (POC) binding site, firm binding to the membrane (mainly driven by hydrophobic interactions) accompanied by the transfer of the N-terminal region to the lipid-water interface and finally pore formation after oligomerization of monomers. This protein shows potent hemolytic activity (EC(50)=8.8 ng/ml) that is specifically inhibited by sphingomyelin. Shows no phospholipase A2 activity, nor antimicrobial activity against the four bacteria tested. Is lethal to crayfish. The protein is DELTA-actitoxin-Aas1a of Anthopleura asiatica (Sea anemone).